The chain runs to 337 residues: MNTEATHDQNEALTTGARLRNAREQLGLSQQAVAERLCLKVSTVRDIEEDKAPADLASTFLRGYIRSYARLVHIPEEELLPGLEKQAPLRAAKVAPMQSFSLGKRRKKRDGWLMTFTWLVLFVVIGLSGAWWWQDHKAQQEEITTMADQSSAELSSNSEQGQSVPLNTSTTTDPATTSTPPASVDTTATNTQTPAVTAPAPAVDPQQNAVVSPSQANVDTAATPAPTATTTPDGAAPLPTDQAGVTTPAADPNALVMNFTADCWLEVTDATGKKLFSGMQRKDGNLNLTGQAPYKLKIGAPAAVQIQYQGKPVDLSRFIRTNQVARLTLNAEQSPAQ.

Residues 1 to 111 (MNTEATHDQN…LGKRRKKRDG (111 aa)) lie on the Cytoplasmic side of the membrane. In terms of domain architecture, HTH cro/C1-type spans 19-71 (LRNAREQLGLSQQAVAERLCLKVSTVRDIEEDKAPADLASTFLRGYIRSYARL). Positions 30-49 (QQAVAERLCLKVSTVRDIEE) form a DNA-binding region, H-T-H motif. The chain crosses the membrane as a helical; Signal-anchor for type II membrane protein span at residues 112-132 (WLMTFTWLVLFVVIGLSGAWW). The Periplasmic segment spans residues 133–337 (WQDHKAQQEE…TLNAEQSPAQ (205 aa)). The segment covering 145–167 (TMADQSSAELSSNSEQGQSVPLN) has biased composition (polar residues). The interval 145–237 (TMADQSSAEL…ATTTPDGAAP (93 aa)) is disordered. A compositionally biased stretch (low complexity) spans 168–207 (TSTTTDPATTSTPPASVDTTATNTQTPAVTAPAPAVDPQQ). Residues 208-218 (NAVVSPSQANV) show a composition bias toward polar residues. Residues 219–237 (DTAATPAPTATTTPDGAAP) show a composition bias toward low complexity.

Belongs to the RodZ family.

The protein localises to the cell inner membrane. In terms of biological role, cytoskeletal protein that is involved in cell-shape control through regulation of the length of the long axis. The polypeptide is Cytoskeleton protein RodZ (Escherichia coli (strain 55989 / EAEC)).